Consider the following 319-residue polypeptide: Lipase 1 (319 aa).

The Nucleophile role is filled by S189. Ca(2+) contacts are provided by D314 and D317.

It catalyses the reaction a triacylglycerol + H2O = a diacylglycerol + a fatty acid + H(+). The protein is Lipase 1 (lip1) of Moraxella sp. (strain TA144).